A 67-amino-acid polypeptide reads, in one-letter code: Arasin 2 (67 aa).

The signal sequence occupies residues 1-25 (MERRTLLVVLLVCSCVVAAAAEASP). The segment at 22 to 44 (EASPSRWPSPGRPRPFPGRPNPI) is disordered. Residues 31 to 44 (PGRPRPFPGRPNPI) are compositionally biased toward pro residues. Intrachain disulfides connect Cys-50/Cys-59 and Cys-52/Cys-57.

As to quaternary structure, interacts with chitin through the N-terminal region (26-48). This interaction may be important, since chitin is a component of the fungal cell wall, as well as of the crab exoskeleton (permitting a possible action of arasin in wound healing in case of lesions). Post-translationally, disulfide bonds are important for activity especially against Gram-negative bacteria, since the linearization of the peptide causes a strong decrease of activity on these bacteria. Mainly expressed in hemocytes. No or very low expression in heart, gills, inestines, and epidermis.

Functionally, antimicrobial peptide that has a large activity spectrum with activity against Gram-positive, Gram-negative bacteria, as well as against fungi. Shows activity at micromolar concentrations. Displays minimal inhibitory concentration (MIC) values lower than minimal bactericidal concentrations (MBC). May have a dual mode of action depending on the peptide concentrations. At MIC concentrations, the peptide penetrates into the cytoplasm of target cells (tested on the Gram-negative E.coli). The two inner membrane proteins YgdD and SbmA may be required for this uptake. At concentrations higher than MIC, arasin may act by disrupting membranes. Does not show hemolytic activity. In Hyas araneus (Atlantic lyre crab), this protein is Arasin 2.